The chain runs to 591 residues: Aspartate--tRNA(Asp/Asn) ligase (591 aa).

Glu-176 is an L-aspartate binding site. Residues 200–203 (QLFK) are aspartate. Arg-222 contacts L-aspartate. Residues 222 to 224 (RDE) and Gln-231 each bind ATP. Residue His-450 coordinates L-aspartate. Residue Glu-484 coordinates ATP. Position 491 (Arg-491) interacts with L-aspartate. 536–539 (GLDR) provides a ligand contact to ATP.

The protein belongs to the class-II aminoacyl-tRNA synthetase family. Type 1 subfamily. As to quaternary structure, homodimer.

It localises to the cytoplasm. It catalyses the reaction tRNA(Asx) + L-aspartate + ATP = L-aspartyl-tRNA(Asx) + AMP + diphosphate. Aspartyl-tRNA synthetase with relaxed tRNA specificity since it is able to aspartylate not only its cognate tRNA(Asp) but also tRNA(Asn). Reaction proceeds in two steps: L-aspartate is first activated by ATP to form Asp-AMP and then transferred to the acceptor end of tRNA(Asp/Asn). This is Aspartate--tRNA(Asp/Asn) ligase from Bacillus anthracis (strain CDC 684 / NRRL 3495).